A 141-amino-acid chain; its full sequence is Albumin-8 (141 aa).

An N-terminal signal peptide occupies residues 1-25; it reads MARFSIVFAAAGVLLLVAMAPVSEA. A propeptide spanning residues 26–38 is cleaved from the precursor; sequence STTTIITTIIEEN. 4 disulfides stabilise this stretch: C49/C100, C62/C89, C90/C132, and C102/C139.

The protein belongs to the 2S seed storage albumins family. As to quaternary structure, heterodimer; disulfide-linked.

Functionally, this is a 2S seed storage protein. This Helianthus annuus (Common sunflower) protein is Albumin-8.